The sequence spans 151 residues: Centrin-A (151 aa).

2 EF-hand domains span residues 80 to 115 (DVYA…LGEA) and 116 to 151 (RSDS…KKIY). Residues Asp93, Asp95, Ser97, Tyr99, Asp104, Asp129, Asn131, Asp133, Lys135, and Glu140 each coordinate Ca(2+).

It belongs to the centrin family.

It is found in the cytoplasm. The protein localises to the cytoskeleton. Its subcellular location is the microtubule organizing center. The protein resides in the centrosome. It localises to the nucleus. Functionally, plays a fundamental role in microtubule-organizing center structure and function. The protein is Centrin-A (cenA) of Dictyostelium discoideum (Social amoeba).